The chain runs to 231 residues: MNRLLSVFALGGAVLLAGCVAPTPKPNDPYYAPVLPRTPLPAAANNGSIYQAGFEQNLYSDRKAFRVGDIITITLNEKTSASKNAGSQIQKNSKADIGLTSLFGSTPNTNNPFGGGDLSLEAGYNGERATKGDSKATQGNTLTGSITVTVAEVLPNGIIAVRGEKWLTLNTGEELVRIAGMVRADDIATDNTVPSTRVADARITYSGTGSFADASQPGWLDRFFISPLWPF.

Positions 1 to 18 are cleaved as a signal peptide; that stretch reads MNRLLSVFALGGAVLLAG. C19 carries the N-palmitoyl cysteine lipid modification. C19 carries S-diacylglycerol cysteine lipidation.

Belongs to the FlgH family. The basal body constitutes a major portion of the flagellar organelle and consists of four rings (L,P,S, and M) mounted on a central rod.

The protein resides in the cell outer membrane. Its subcellular location is the bacterial flagellum basal body. Its function is as follows. Assembles around the rod to form the L-ring and probably protects the motor/basal body from shearing forces during rotation. The polypeptide is Flagellar L-ring protein (Pseudomonas putida (strain GB-1)).